The chain runs to 553 residues: MAAPKTAAVGPLVGAVVQGTNSTRFLVFNSKTAELLSHHKVELTQEFPKEGWVEQDPKEILQSVYECIARTCEKLDELNIDISNIKAVGVSNQRETTVIWDKLTGEPLYNAVVWLDLRTQTTVEDLSKKIPGNSNFVKSKTGLPLSTYFSAVKLRWMLDNVRNVQKAVEEGRALFGTIDSWLIWSLTGGVNGGVHCTDVTNASRTMLFNIHSLEWDKELCDFFEIPMDLLPNVFSSSEIYGLIKTGALEGVPISGCLGDQCAALVGQMCFQEGQAKNTYGTGCFLLCNTGRKCVFSEHGLLTTVAYKLGREKPAYYALEGSVAIAGAVIRWLRDNLGIIETSGDIERLAKEVGTSYGCYFVPAFSGLYAPYWEPSARGILCGLTQFTNKCHIAFAALEAVCFQTREILEAMNRDCGIPLRHLQVDGGMTNNKVLMQLQADILHIPVIKPFMPETTALGAAMAAGAAEGVSVWSLEPQALSVLRMERFEPQIQATESEIRYATWKKAVMKSMGWVTSQSPEGGDPSIFSSLPLGFFIVSSMVMLIGARYISGVP.

Residue Thr20 coordinates substrate. An ATP-binding site is contributed by Arg24. Residues Arg94, Tyr148, and Asp259 each contribute to the substrate site. Residues Thr281, Gly326, and 427-431 (GMTNN) each bind ATP. A helical membrane pass occupies residues 526 to 546 (IFSSLPLGFFIVSSMVMLIGA).

It belongs to the FGGY kinase family. In terms of assembly, interacts with ARMC12. Interacts with PLD6. Testis-specific. Expressed in the midpiece of spermatozoa.

The protein localises to the mitochondrion outer membrane. It localises to the cytoplasm. It catalyses the reaction glycerol + ATP = sn-glycerol 3-phosphate + ADP + H(+). The protein operates within polyol metabolism; glycerol degradation via glycerol kinase pathway; sn-glycerol 3-phosphate from glycerol: step 1/1. Functionally, key enzyme in the regulation of glycerol uptake and metabolism. Essential for male fertility and sperm mitochondrial sheath formation. Required for proper arrangement of crescent-like mitochondria to form the mitochondrial sheath during spermatogenesis. Can induce mitochondrial clustering through interactions with PLD6 and up-regulation of phosphatidic acid synthesis in the mitochondria. The protein is Glycerol kinase 2 (GK2) of Homo sapiens (Human).